Consider the following 121-residue polypeptide: Large ribosomal subunit protein uL14c (121 aa).

This sequence belongs to the universal ribosomal protein uL14 family. Part of the 50S ribosomal subunit.

The protein resides in the plastid. It is found in the chloroplast. Its function is as follows. Binds to 23S rRNA. The sequence is that of Large ribosomal subunit protein uL14c from Thalassiosira pseudonana (Marine diatom).